The sequence spans 263 residues: Glutathione S-transferase F8, chloroplastic (263 aa).

The N-terminal 49 residues, 1-49, are a transit peptide targeting the chloroplast; the sequence is MGAIQARLPLFLSPPSIKHHTFLHSSSSNSNFKIRSNKSSSSSSSSIIM. Residues 50–131 enclose the GST N-terminal domain; the sequence is ASIKVHGVPM…YLAEEYSEKG (82 aa). Residues 60 to 61, 89 to 90, 102 to 103, and 115 to 116 each bind glutathione; these read ST, HK, QI, and ES. A GST C-terminal domain is found at 139–263; it reads CKKVKATTNV…WAKVIDLQKQ (125 aa). Phosphothreonine is present on Thr177.

This sequence belongs to the GST superfamily. Phi family. In terms of tissue distribution, isoform 1 is predominantly expressed in leaves and isoform 2 in roots.

The protein localises to the plastid. Its subcellular location is the chloroplast. It is found in the cytoplasm. It localises to the cytosol. The catalysed reaction is RX + glutathione = an S-substituted glutathione + a halide anion + H(+). Its function is as follows. In vitro, possesses glutathione S-transferase activity toward 1-chloro-2,4-dinitrobenzene (CDNB) and glutathione peroxidase activity toward cumene hydroperoxide and linoleic acid-13-hydroperoxide. May be involved in the conjugation of reduced glutathione to a wide number of exogenous and endogenous hydrophobic electrophiles and have a detoxification role against certain herbicides. In Arabidopsis thaliana (Mouse-ear cress), this protein is Glutathione S-transferase F8, chloroplastic (GSTF8).